Consider the following 259-residue polypeptide: Snake venom serine protease homolog rhinocerase 2 (259 aa).

The signal sequence occupies residues 1-17 (VLIRVLANLLLLQLSYA). A propeptide spanning residues 18-23 (QESSEL) is cleaved from the precursor. The Peptidase S1 domain occupies 24–250 (VIGGDECDIN…YTDWIEGIIA (227 aa)). Disulfide bonds link C30–C164, C51–C67, C99–C257, C143–C211, C175–C190, and C201–C226. Residue N252 is glycosylated (N-linked (GlcNAc...) asparagine).

It belongs to the peptidase S1 family. Snake venom subfamily. Expressed by the venom gland.

It is found in the secreted. Snake venom serine protease homolog that may act in the hemostasis system of the prey. The protein is Snake venom serine protease homolog rhinocerase 2 of Bitis rhinoceros (West African gaboon viper).